Reading from the N-terminus, the 407-residue chain is 1-deoxy-D-xylulose 5-phosphate reductoisomerase (407 aa).

6 residues coordinate NADPH: threonine 25, glycine 26, serine 27, isoleucine 28, asparagine 53, and asparagine 136. A 1-deoxy-D-xylulose 5-phosphate-binding site is contributed by lysine 137. Glutamate 138 lines the NADPH pocket. Aspartate 162 contributes to the Mn(2+) binding site. Positions 163, 164, 188, and 211 each coordinate 1-deoxy-D-xylulose 5-phosphate. Glutamate 164 serves as a coordination point for Mn(2+). Residue glycine 217 coordinates NADPH. Residues serine 224, asparagine 229, lysine 230, and glutamate 233 each contribute to the 1-deoxy-D-xylulose 5-phosphate site. Glutamate 233 provides a ligand contact to Mn(2+).

The protein belongs to the DXR family. The cofactor is Mg(2+). Mn(2+) is required as a cofactor.

It catalyses the reaction 2-C-methyl-D-erythritol 4-phosphate + NADP(+) = 1-deoxy-D-xylulose 5-phosphate + NADPH + H(+). It participates in isoprenoid biosynthesis; isopentenyl diphosphate biosynthesis via DXP pathway; isopentenyl diphosphate from 1-deoxy-D-xylulose 5-phosphate: step 1/6. In terms of biological role, catalyzes the NADPH-dependent rearrangement and reduction of 1-deoxy-D-xylulose-5-phosphate (DXP) to 2-C-methyl-D-erythritol 4-phosphate (MEP). The sequence is that of 1-deoxy-D-xylulose 5-phosphate reductoisomerase from Bradyrhizobium sp. (strain BTAi1 / ATCC BAA-1182).